Here is a 472-residue protein sequence, read N- to C-terminus: MKFLSEDFLLNNESAKLLFHEHAEKMPIIDYHCHLEPAEIYENKKYENLTQIWLGGDHYKWRLLRANGIPEKLITGDGDDYEKFLAFAKTLEKSLGNPIYEWTHLELKRFFHIDKLISSETEKEIWDEANQMLATDDFRPRALIKNSNVKVVCTTDDPVSKLSYHKSLAKEEKDFKVLPALRPDHLISITDGHFAEYLMELSAVSGIKIKDFKTMIKALEQRFEFFTSLGGRLSDHSLSTYTFAETKNVDLDSILQKAKENQTLTDLEYNQYITALILEIMKLNKKFDWTMQLHVNVNRSINGPALRKIGENTGFDSMGTQANISEELTKLFSKAAELEIIPKTILYSLNQNDWLELATLIGCFQGEGVQQLQLGAGWWFNDTAKGMEKQLEIFASQSLLPNFVGMLTDSRSFLSYPRHEYFRRVLCNFVGQLIESGRIPDDEALVGKMIEDISYNNVHDYFGFFKNEDSKQ.

Belongs to the metallo-dependent hydrolases superfamily. Uronate isomerase family.

It catalyses the reaction D-glucuronate = D-fructuronate. It carries out the reaction aldehydo-D-galacturonate = keto-D-tagaturonate. It participates in carbohydrate metabolism; pentose and glucuronate interconversion. The chain is Uronate isomerase from Lactococcus lactis subsp. cremoris (strain MG1363).